Consider the following 888-residue polypeptide: Glutamate receptor 3 (888 aa).

An N-terminal signal peptide occupies residues 1–22 (MGQSVLRAVFFLVLGLLGHSHG). The Extracellular portion of the chain corresponds to 23-546 (GFPNTISIGG…GVFSFLDPLA (524 aa)). Residues Asn-57, Asn-260, Asn-374, Asn-409, and Asn-416 are each glycosylated (N-linked (GlcNAc...) asparagine). Cysteines 85 and 334 form a disulfide. L-glutamate-binding residues include Pro-502, Thr-504, and Arg-509. Residues 547 to 567 (YEIWMCIVFAYIGVSVVLFLV) form a helical membrane-spanning segment. At 568–596 (SRFSPYEWHLEDNNEEPRDPQSPPDPPNE) the chain is on the cytoplasmic side. The helical; Pore-forming intramembrane region spans 597–612 (FGIFNSLWFSLGAFMQ). The stretch at 613–615 (QGC) is an intramembrane region. A lipid anchor (S-palmitoyl cysteine) is attached at Cys-615. The Cytoplasmic portion of the chain corresponds to 616–621 (DISPRS). The chain crosses the membrane as a helical span at residues 622–642 (LSGRIVGGVWWFFTLIIISSY). Residues 643–817 (TANLAAFLTV…DKTSALSLSN (175 aa)) are Extracellular-facing. The L-glutamate site is built by Ser-680, Thr-681, and Glu-731. Cys-744 and Cys-799 are disulfide-bonded. Residues 818-838 (VAGVFYILVGGLGLAMMVALI) form a helical membrane-spanning segment. The Cytoplasmic segment spans residues 839–888 (EFCYKSRAESKRMKLTKNTQNFKPAPATNTQNYATYREGYNVYGTESVKI). A lipid anchor (S-palmitoyl cysteine) is attached at Cys-841. Tyr-871 and Tyr-881 each carry phosphotyrosine.

This sequence belongs to the glutamate-gated ion channel (TC 1.A.10.1) family. GRIA3 subfamily. As to quaternary structure, homotetramer or heterotetramer of pore-forming glutamate receptor subunits. Tetramers may be formed by the dimerization of dimers. Interacts with PICK1, GRIP1 and GRIP2. Found in a complex with GRIA1, GRIA2, GRIA4, CNIH2, CNIH3, CACNG2, CACNG3, CACNG4, CACNG5, CACNG7 and CACNG8. Interacts with CACNG5. Found in a complex with GRIA1, GRIA2, GRIA4, DLG4, CACNG8 and CNIH2.

The protein localises to the cell membrane. It localises to the postsynaptic cell membrane. Its subcellular location is the postsynaptic density membrane. It catalyses the reaction Ca(2+)(in) = Ca(2+)(out). Functionally, ionotropic glutamate receptor that functions as a ligand-gated cation channel, gated by L-glutamate and glutamatergic agonists such as alpha-amino-3-hydroxy-5-methyl-4-isoxazolepropionic acid (AMPA), quisqualic acid, and kainic acid. L-glutamate acts as an excitatory neurotransmitter at many synapses in the central nervous system and plays an important role in fast excitatory synaptic transmission by inducing long-term potentiation. Binding of the excitatory neurotransmitter L-glutamate induces a conformation change, leading to the opening of the cation channel, and thereby converts the chemical signal to an electrical impulse upon entry of calcium. The receptor then desensitizes rapidly and enters a transient inactive state, characterized by the presence of bound agonist. In the presence of CACNG8, shows resensitization which is characterized by a delayed accumulation of current flux upon continued application of glutamate. The sequence is that of Glutamate receptor 3 from Rattus norvegicus (Rat).